We begin with the raw amino-acid sequence, 355 residues long: Alpha-N-acetylneuraminide alpha-2,8-sialyltransferase (355 aa).

Residues 1-28 are Cytoplasmic-facing; the sequence is MSPCGRALHTSRGAMAMLARKFPRTRLP. The chain crosses the membrane as a helical; Signal-anchor for type II membrane protein span at residues 29–47; it reads VGASALCVVVLCWLYIFPV. Residues 48 to 355 lie on the Lumenal side of the membrane; sequence YRLPNEKEIV…CEEPSPQPTS (308 aa). N-linked (GlcNAc...) asparagine glycans are attached at residues Asn-70 and Asn-118. 2 disulfide bridges follow: Cys-137–Cys-286 and Cys-151–Cys-346. Residues Asn-142 and Asn-165 each contribute to the CMP-N-acetyl-beta-neuraminate site. N-linked (GlcNAc...) asparagine glycans are attached at residues Asn-213 and Asn-244. The CMP-N-acetyl-beta-neuraminate site is built by Ser-273, Thr-274, Gly-275, Trp-295, and His-309. His-321 acts as the Proton donor/acceptor in catalysis.

Belongs to the glycosyltransferase 29 family.

The protein localises to the golgi apparatus membrane. The enzyme catalyses an N-acetyl-alpha-neuraminyl-(2-&gt;3)-beta-D-galactosyl derivative + CMP-N-acetyl-beta-neuraminate = an N-acetyl-alpha-neuraminyl-(2-&gt;8)-N-acetyl-alpha-neuraminyl-(2-&gt;3)-beta-D-galactosyl derivative + CMP + H(+). It carries out the reaction a ganglioside GM3 (d18:1(4E)) + CMP-N-acetyl-beta-neuraminate = a ganglioside GD3 (d18:1(4E)) + CMP + H(+). The catalysed reaction is a ganglioside GD3 (d18:1(4E)) + CMP-N-acetyl-beta-neuraminate = a ganglioside GT3 (d18:1(4E)) + CMP + H(+). It catalyses the reaction a ganglioside GD1a (d18:1(4E)) + CMP-N-acetyl-beta-neuraminate = a ganglioside GT1a (d18:1(4E)) + CMP + H(+). The enzyme catalyses a ganglioside GT1b (d18:1(4E)) + CMP-N-acetyl-beta-neuraminate = a ganglioside GQ1b (d18:1(4E)) + CMP + H(+). It carries out the reaction a ganglioside GM1b (d18:1(4E)) + CMP-N-acetyl-beta-neuraminate = a ganglioside GD1c (d18:1(4E)) + CMP + H(+). The catalysed reaction is a ganglioside GD3 + CMP-N-acetyl-beta-neuraminate = a ganglioside GT3 + CMP + H(+). It catalyses the reaction [alpha-N-acetylneuraminyl-(2-&gt;8)](n)-alpha-N-acetylneuraminyl-(2-&gt;8)-alpha-N-acetylneuraminyl-(2-&gt;3)-beta-D-galactosyl-(1-&gt;4)-beta-D-glucosyl-(1&lt;-&gt;1)-ceramide + CMP-N-acetyl-beta-neuraminate = [alpha-N-acetylneuraminyl-(2-&gt;8)](n+1)-alpha-N-acetylneuraminyl-(2-&gt;8)-alpha-N-acetylneuraminyl-(2-&gt;3)-beta-D-galactosyl-(1-&gt;4)-beta-D-glucosyl-(1&lt;-&gt;1)-ceramide + CMP + H(+). The protein operates within protein modification; protein glycosylation. It functions in the pathway lipid metabolism; sphingolipid metabolism. Its function is as follows. Catalyzes the addition of sialic acid in alpha 2,8-linkage to the sialic acid moiety of the ganglioside GM3 to form ganglioside GD3; gangliosides are a subfamily of complex glycosphingolipds that contain one or more residues of sialic acid. Can catalyze the addition of a second alpha-2,8- sialic acid to GD3 to form GT3. Can use GM1b, GD1a and GT1b as acceptor substrates to synthesize GD1c, GT1a and GQ1b respectively. The chain is Alpha-N-acetylneuraminide alpha-2,8-sialyltransferase from Mus musculus (Mouse).